The sequence spans 736 residues: Segment polarity protein dishevelled homolog DVL-2 (736 aa).

The DIX domain occupies 11–93 (VGETKVIYHL…RVVSWLVSSD (83 aa)). Residues 93 to 255 (DTPQPEVAPP…RMERTSSFSS (163 aa)) are disordered. Residues 111–122 (VPPPPPLPPLPP) show a composition bias toward pro residues. The span at 159-171 (LRRDRPRRRDSSE) shows a compositional bias: basic and acidic residues. The span at 193–208 (ESSSTLMTSELESTSL) shows a compositional bias: low complexity. Ser211 carries the post-translational modification Phosphoserine. Polar residues predominate over residues 218–230 (SRFSSSTEQSSAS). Residues 232-244 (LLKRHRRRRKQRP) are compositionally biased toward basic residues. One can recognise a PDZ domain in the interval 267 to 339 (TVTLNMEKYN…NDDAVRVLRD (73 aa)). The region spanning 433 to 507 (PESGLEVRDR…SEQCYYVFGD (75 aa)) is the DEP domain. A compositionally biased stretch (pro residues) spans 558–568 (PHPYSPQPPPY). Positions 558-665 (PHPYSPQPPP…PNLRALPGLH (108 aa)) are disordered. Composition is skewed to low complexity over residues 581–598 (ASSQ…TRSD) and 614–629 (SKSG…SRGG).

Belongs to the DSH family. As to quaternary structure, interacts through its PDZ domain with the C-terminal regions of VANGL1 and VANGL2. Interacts with Rac. Interacts with ARRB1; the interaction is enhanced by phosphorylation of DVL1. Can form large oligomers (via DIX domain). Interacts (via DIX domain) with DIXDC1 (via DIX domain). Interacts (via DEP domain) with AP2M1 and the AP-2 complex. Interacts with FAM105B/otulin. Interacts with DCDC2. Interacts (when phosphorylated) with FOXK1 and FOXK2; the interaction induces DVL2 nuclear translocation. Interacts with MAPK15. Interacts with PKD1 (via extracellular domain). Interacts with LMBR1L. Phosphorylated by CSNK1D. WNT3A induces DVL2 phosphorylation by CSNK1E and MARK kinases. In terms of processing, ubiquitinated via 'Lys-63'-linked polyubiquitin chains; leading to its autophagy-mediated degradation. In terms of tissue distribution, ubiquitous.

It localises to the cell membrane. The protein resides in the cytoplasm. Its subcellular location is the cytosol. The protein localises to the cytoplasmic vesicle. It is found in the nucleus. In terms of biological role, plays a role in the signal transduction pathways mediated by multiple Wnt genes. Participates both in canonical and non-canonical Wnt signaling by binding to the cytoplasmic C-terminus of frizzled family members and transducing the Wnt signal to down-stream effectors. Promotes internalization and degradation of frizzled proteins upon Wnt signaling. The chain is Segment polarity protein dishevelled homolog DVL-2 (Dvl2) from Mus musculus (Mouse).